We begin with the raw amino-acid sequence, 1097 residues long: RecBCD enzyme subunit RecC (1097 aa).

It belongs to the RecC family. In terms of assembly, heterotrimer of RecB, RecC and RecD. All subunits contribute to DNA-binding.

A helicase/nuclease that prepares dsDNA breaks (DSB) for recombinational DNA repair. Binds to DSBs and unwinds DNA via a highly rapid and processive ATP-dependent bidirectional helicase activity. Holoenzyme degrades any linearized DNA that is unable to undergo homologous recombination. In the holoenzyme this subunit recognizes the wild-type Chi sequence, and when added to isolated RecB increases its ATP-dependent helicase processivity. Unlike the case in E.coli, suppresses RecA-dependent homologous recombination, is instead required for single-strand annealing pathway repair of DSB. The protein is RecBCD enzyme subunit RecC of Mycobacterium tuberculosis (strain ATCC 25618 / H37Rv).